The following is an 879-amino-acid chain: Alanine--tRNA ligase (879 aa).

Residues histidine 566, histidine 570, cysteine 668, and histidine 672 each contribute to the Zn(2+) site.

Belongs to the class-II aminoacyl-tRNA synthetase family. The cofactor is Zn(2+).

It is found in the cytoplasm. It carries out the reaction tRNA(Ala) + L-alanine + ATP = L-alanyl-tRNA(Ala) + AMP + diphosphate. Catalyzes the attachment of alanine to tRNA(Ala) in a two-step reaction: alanine is first activated by ATP to form Ala-AMP and then transferred to the acceptor end of tRNA(Ala). Also edits incorrectly charged Ser-tRNA(Ala) and Gly-tRNA(Ala) via its editing domain. This is Alanine--tRNA ligase from Clostridium botulinum (strain Loch Maree / Type A3).